Here is a 363-residue protein sequence, read N- to C-terminus: Ataxin-3 (363 aa).

The region spanning 1-180 (MESIFHERQE…DCEADQLLQM (180 aa)) is the Josephin domain. Cys-14 (nucleophile) is an active-site residue. His-119 serves as the catalytic Proton acceptor. Residue Asn-134 is part of the active site. A compositionally biased stretch (basic and acidic residues) spans 192–209 (IGEETAQSRDQRLPRSDV). Residues 192 to 212 (IGEETAQSRDQRLPRSDVDQA) are disordered. 3 UIM domains span residues 227-246 (EDEE…IDME), 247-266 (DEEA…SRQS), and 337-356 (SEED…ARNH). The span at 260–290 (MQGSRQSEFSNSLPQNASQPPHTSQTDSLSS) shows a compositional bias: polar residues. Positions 260-363 (MQGSRQSEFS…RNHLSTEEKK (104 aa)) are disordered. Residues 353 to 363 (ARNHLSTEEKK) show a composition bias toward basic and acidic residues.

As to expression, widely expressed.

It is found in the nucleus matrix. It localises to the nucleus. The protein resides in the lysosome membrane. The enzyme catalyses Thiol-dependent hydrolysis of ester, thioester, amide, peptide and isopeptide bonds formed by the C-terminal Gly of ubiquitin (a 76-residue protein attached to proteins as an intracellular targeting signal).. Deubiquitinating enzyme involved in protein homeostasis maintenance, transcription, cytoskeleton regulation, myogenesis and degradation of misfolded chaperone substrates. Binds long polyubiquitin chains and trims them, while it has weak or no activity against chains of 4 or less ubiquitins. Involved in degradation of misfolded chaperone substrates via its interaction with STUB1/CHIP: recruited to monoubiquitinated STUB1/CHIP, and restricts the length of ubiquitin chain attached to STUB1/CHIP substrates and preventing further chain extension. Interacts with key regulators of transcription and represses transcription: acts as a histone-binding protein that regulates transcription. Acts as a negative regulator of mTORC1 signaling in response to amino acid deprivation by mediating deubiquitination of RHEB, thereby promoting RHEB inactivation by the TSC-TBC complex. Regulates autophagy via the deubiquitination of 'Lys-402' of BECN1 leading to the stabilization of BECN1. The protein is Ataxin-3 (ATXN3) of Gallus gallus (Chicken).